The sequence spans 296 residues: Tuberculosinyl adenosine transferase (296 aa).

This sequence belongs to the diterpene synthase family. In terms of assembly, homodimer. Requires Mg(2+) as cofactor.

It carries out the reaction tuberculosinyl diphosphate + adenosine + H(+) = 1-tuberculosinyladenosine + diphosphate. The catalysed reaction is tuberculosinyl diphosphate + H2O = tuberculosinol + diphosphate. It catalyses the reaction tuberculosinyl diphosphate + H2O = (13R)-edaxadiene + diphosphate. The enzyme catalyses tuberculosinyl diphosphate + H2O = (13S)-edaxadiene + diphosphate. Tuberculosinyl transferase that catalyzes the condensation of adenosine and tuberculosinyl diphosphate (TbPP) to generate 1-tuberculosinyladenosine (1-TbAd), which acts as an antiacid that directly protects M.tuberculosis from acid pH and physically remodels M.tuberculosis phagolysosomes. In addition, acts as a phosphatase that catalyzes the diphosphate-removal from TbPP to produce both tuberculosinol (TOH) and isotuberculosinol (iso-TOH). This chain is Tuberculosinyl adenosine transferase, found in Mycobacterium tuberculosis (strain CDC 1551 / Oshkosh).